A 706-amino-acid polypeptide reads, in one-letter code: Zinc finger and BTB domain-containing protein 17 (706 aa).

A BTB domain is found at 1-12; the sequence is LKSLTVLAESPV. The segment at 32–194 is disordered; that stretch reads TAARVTQGDS…LLRSGTYSDR (163 aa). Residues 67–78 show a composition bias toward basic and acidic residues; it reads EPAEQPDAKEGP. Positions 90–106 are enriched in low complexity; it reads AAEASPAAVSPSRPQPA. The segment covering 134 to 148 has biased composition (acidic residues); the sequence is GKEEEGEAMVEDEEE. Residues 170–182 are compositionally biased toward polar residues; that stretch reads SGSTDSGQENSGE. 13 consecutive C2H2-type zinc fingers follow at residues 205–227, 233–255, 261–283, 289–311, 317–339, 345–367, 373–395, 401–423, 427–450, 457–479, 485–507, 513–536, and 618–640; these read HKCEDCGKEFTHTGNFKRHIRIH, FSCRECNKAFSDPAACKAHEKTH, YGCEECGKSYRLISLLNLHKKRH, YRCDDCGKLFTTSGNLKRHQLVH, YQCDYCGRSFSDPTSKMRHLETH, HKCPHCDKKFNQVGNLKAHLKIH, LKCRECGNEFTTSGNLKRHLRIH, YVCVHCQRQFADPGALQAHVPIH, KPCQCLICGKAFTQASSLIAHVRH, YVCERCGKRFVQSSQLANHIRHH, HKCTVCNKAFVNVGDLSKHIIIH, FLCDKCGRGFNRVDNLRSHVKTVH, and YACDSCGEKFLDATSLAQHVRIH. The disordered stretch occupies residues 680 to 706; the sequence is PRDSPQEAPAAPLAPVPLAGEGQAPAE. Low complexity predominate over residues 687 to 698; the sequence is APAAPLAPVPLA.

Belongs to the krueppel C2H2-type zinc-finger protein family.

Its subcellular location is the nucleus. Transcription factor that can function as an activator or repressor depending on its binding partners, and by targeting negative regulators of cell cycle progression. Plays a critical role in early lymphocyte development, where it is essential to prevent apoptosis in lymphoid precursors, allowing them to survive in response to IL7 and undergo proper lineage commitment. Has been shown to bind to the promoters of adenovirus major late protein and cyclin D1 and activate transcription. Required for early embryonic development during gastrulation. Represses RB1 transcription. The protein is Zinc finger and BTB domain-containing protein 17 (ZBTB17) of Gallus gallus (Chicken).